The sequence spans 138 residues: Single-stranded DNA-binding protein 4 (138 aa).

An SSB domain is found at 1–104 (MINNVVLIGR…VVADSFQILE (104 aa)). The disordered stretch occupies residues 107–138 (DNSTNQASMDDQLPPSFGNSQPMDISDDDLPF). The short motif at 133 to 138 (DDDLPF) is the Important for interaction with partner proteins element.

In terms of assembly, homotetramer.

In terms of biological role, plays an important role in DNA replication, recombination and repair. Binds to ssDNA and to an array of partner proteins to recruit them to their sites of action during DNA metabolism. This chain is Single-stranded DNA-binding protein 4 (ssb4), found in Streptococcus agalactiae serotype V (strain ATCC BAA-611 / 2603 V/R).